The sequence spans 84 residues: Small ribosomal subunit protein eS27 (84 aa).

Over residues 1-16 the composition is skewed to basic and acidic residues; it reads MPLAKDLLHPSPEEEK. Positions 1-23 are disordered; sequence MPLAKDLLHPSPEEEKRKHKKKR. S11 carries the phosphoserine modification. The C4-type zinc finger occupies 38 to 60; that stretch reads PGCYKITTVFSHAQTVVLCVGCS.

It belongs to the eukaryotic ribosomal protein eS27 family. In terms of assembly, component of the small ribosomal subunit. Part of the small subunit (SSU) processome, composed of more than 70 proteins and the RNA chaperone small nucleolar RNA (snoRNA) U3. It depends on Zn(2+) as a cofactor.

The protein localises to the cytoplasm. Its subcellular location is the nucleus. It is found in the nucleolus. Component of the small ribosomal subunit. The ribosome is a large ribonucleoprotein complex responsible for the synthesis of proteins in the cell. Required for proper rRNA processing and maturation of 18S rRNAs. Part of the small subunit (SSU) processome, first precursor of the small eukaryotic ribosomal subunit. During the assembly of the SSU processome in the nucleolus, many ribosome biogenesis factors, an RNA chaperone and ribosomal proteins associate with the nascent pre-rRNA and work in concert to generate RNA folding, modifications, rearrangements and cleavage as well as targeted degradation of pre-ribosomal RNA by the RNA exosome. This Mus musculus (Mouse) protein is Small ribosomal subunit protein eS27.